The primary structure comprises 115 residues: Large ribosomal subunit protein bL20 (115 aa).

This sequence belongs to the bacterial ribosomal protein bL20 family.

In terms of biological role, binds directly to 23S ribosomal RNA and is necessary for the in vitro assembly process of the 50S ribosomal subunit. It is not involved in the protein synthesizing functions of that subunit. The chain is Large ribosomal subunit protein bL20 from Cytophaga hutchinsonii (strain ATCC 33406 / DSM 1761 / CIP 103989 / NBRC 15051 / NCIMB 9469 / D465).